Reading from the N-terminus, the 502-residue chain is Bifunctional purine biosynthesis protein PurH (502 aa).

The 144-residue stretch at 1–144 (MKKRALISVF…KNFQDVVVIS (144 aa)) folds into the MGS-like domain.

This sequence belongs to the PurH family.

The catalysed reaction is (6R)-10-formyltetrahydrofolate + 5-amino-1-(5-phospho-beta-D-ribosyl)imidazole-4-carboxamide = 5-formamido-1-(5-phospho-D-ribosyl)imidazole-4-carboxamide + (6S)-5,6,7,8-tetrahydrofolate. It catalyses the reaction IMP + H2O = 5-formamido-1-(5-phospho-D-ribosyl)imidazole-4-carboxamide. It participates in purine metabolism; IMP biosynthesis via de novo pathway; 5-formamido-1-(5-phospho-D-ribosyl)imidazole-4-carboxamide from 5-amino-1-(5-phospho-D-ribosyl)imidazole-4-carboxamide (10-formyl THF route): step 1/1. The protein operates within purine metabolism; IMP biosynthesis via de novo pathway; IMP from 5-formamido-1-(5-phospho-D-ribosyl)imidazole-4-carboxamide: step 1/1. The protein is Bifunctional purine biosynthesis protein PurH of Clostridium beijerinckii (strain ATCC 51743 / NCIMB 8052) (Clostridium acetobutylicum).